The sequence spans 178 residues: Fatty-acid and retinol-binding protein 1 (178 aa).

A signal peptide spans 1-16 (MYHQLILLALIGTIMA). Coiled coils occupy residues 67–89 (DAAL…ELRN) and 129–154 (IKQA…LKVT).

It belongs to the fatty-acid and retinol-binding protein (FARBP) family. Post-translationally, not glycosylated.

Its subcellular location is the secreted. Its function is as follows. Binds retinol and different fatty acids. The chain is Fatty-acid and retinol-binding protein 1 from Loa loa (Eye worm).